The sequence spans 177 residues: Large ribosomal subunit protein uL6 (177 aa).

The protein belongs to the universal ribosomal protein uL6 family. Part of the 50S ribosomal subunit.

Functionally, this protein binds to the 23S rRNA, and is important in its secondary structure. It is located near the subunit interface in the base of the L7/L12 stalk, and near the tRNA binding site of the peptidyltransferase center. The chain is Large ribosomal subunit protein uL6 from Pseudomonas entomophila (strain L48).